Consider the following 348-residue polypeptide: Protein RecA (348 aa).

ATP is bound at residue 65–72; the sequence is GPESSGKT.

It belongs to the RecA family.

It is found in the cytoplasm. In terms of biological role, can catalyze the hydrolysis of ATP in the presence of single-stranded DNA, the ATP-dependent uptake of single-stranded DNA by duplex DNA, and the ATP-dependent hybridization of homologous single-stranded DNAs. It interacts with LexA causing its activation and leading to its autocatalytic cleavage. The chain is Protein RecA from Alteromonas mediterranea (strain DSM 17117 / CIP 110805 / LMG 28347 / Deep ecotype).